Consider the following 146-residue polypeptide: [Ribosomal protein bS18]-alanine N-acetyltransferase (146 aa).

Residues Ser-2 to Leu-146 form the N-acetyltransferase domain. Ile-69–Ile-71 contacts acetyl-CoA. Glu-103 acts as the Proton acceptor in catalysis. Position 108 (Asn-108) interacts with acetyl-CoA. Tyr-114 (proton donor) is an active-site residue.

The protein belongs to the acetyltransferase family. RimI subfamily.

Its subcellular location is the cytoplasm. It catalyses the reaction N-terminal L-alanyl-[ribosomal protein bS18] + acetyl-CoA = N-terminal N(alpha)-acetyl-L-alanyl-[ribosomal protein bS18] + CoA + H(+). Its function is as follows. Acetylates the N-terminal alanine of ribosomal protein bS18. The protein is [Ribosomal protein bS18]-alanine N-acetyltransferase of Haemophilus influenzae (strain ATCC 51907 / DSM 11121 / KW20 / Rd).